The chain runs to 586 residues: Transcription elongation regulator 1-like protein (586 aa).

Positions 1–30 (MQAGARFQRRRRQLQQQQPRRRQPLLWPMD) are disordered. The segment covering 7–23 (FQRRRRQLQQQQPRRRQ) has biased composition (basic residues). In terms of domain architecture, WW 1 spans 148 to 181 (TPIGKSWIDKRIPNCKIFFNNSFALDSTWIHPEE). 2 disordered regions span residues 281–344 (TSPV…PGSP) and 378–448 (DLNR…QILL). A compositionally biased stretch (basic and acidic residues) spans 306-317 (KSRDGDKEDKEP). A WW 2 domain is found at 339-372 (PVPGSPWCVVWTGDDRVFFFNPTMHLSVWEKPMD). 3 stretches are compositionally biased toward basic and acidic residues: residues 378 to 387 (DLNRIIEDPP), 411 to 421 (DQDVKTKRNRT), and 428 to 439 (KPEEAKREDKGT). 2 consecutive FF domains span residues 450-503 (LEER…FVKT) and 515-570 (KLLL…FILI).

In Homo sapiens (Human), this protein is Transcription elongation regulator 1-like protein (TCERG1L).